Reading from the N-terminus, the 63-residue chain is Large ribosomal subunit protein uL29 (63 aa).

The protein belongs to the universal ribosomal protein uL29 family.

The chain is Large ribosomal subunit protein uL29 from Shewanella baltica (strain OS223).